We begin with the raw amino-acid sequence, 388 residues long: Splicing factor 3B subunit 4 (388 aa).

RRM domains are found at residues 13 to 91 (ATIY…KASA) and 100 to 179 (ANIF…YAFK). The interval 244-388 (QPPPLMGMAQ…GMIPPPPPPS (145 aa)) is disordered. Composition is skewed to pro residues over residues 261 to 325 (PPVP…PSRF), 333 to 355 (MPPP…PPRY), and 362 to 388 (MYPP…PPPS).

This sequence belongs to the SF3B4 family.

The protein resides in the nucleus. Its function is as follows. Subunit of the splicing factor SF3B required for 'A' complex assembly formed by the stable binding of U2 snRNP to the branchpoint sequence (BPS) in pre-mRNA. Sequence independent binding of SF3A/SF3B complex upstream of the branch site is essential, it may anchor U2 snRNP to the pre-mRNA. May also be involved in the assembly of the 'E' complex. SF3B4 has been found in complex 'B' and 'C' as well. Belongs also to the minor U12-dependent spliceosome, which is involved in the splicing of rare class of nuclear pre-mRNA intron. This chain is Splicing factor 3B subunit 4 (sap-49), found in Caenorhabditis elegans.